Consider the following 727-residue polypeptide: MFGDSDGSKDANPGAPPSTTDPPFPNRELTLSSYLCEKPTLASAAAGGGGGAGPSSPPNPAAAAAGDDGKHCVERDFLHLSAPKRGDPPGDDSSVVGGKKPRLDSLQLSLSLNSDGPAAPPSSQPPLASLLQPVPATDGDLRGAAAAAAVPAAPARRTYSATTARTRSINSDDMSYSYSIFSHNPSCSLTHNSTDIYAAGEGTNGSVHSRFNFRPMGDGSVAFATPPLKEGTSSFFPTELPARMAAAAAAAAASAGGSFDGGRGGLHASRPDKILRDIVSDSVTAMAQVLQDFPSERLELLREAVRGMIDSHEKRDELASLQRKLERRSDLTTETLGRANRTQLEILVAIKTGIATFVTGKGRVPSSELVEMFLMTRCRNLNCKSTLPVDDCDCKICSTKKGFCSACTCSVCHKFDCAANTCTWVGCDVCGHWCHVACALERNLIRPGPTLKGPIGTTEMQFQCLACNHSSEMFGFVKEVFNCCAENWNAETLMKELDFVRKIFAGCEDFEGKGLHAKAEEVLSLLGKKIISPLDATNSILQFFKYGVTDYSVTGSTSKGILAAQASQSTDMRSLQTPTITPPKSSFNFKTTTSILDTDALKPSPKPLSIEPHFSTASKEDDSSLETIVKCKEAEAKLFQKLADDARKEVDSYRQIVRSRTQKLEEEYAAKLAKVCFQETEEKRRKKLEELKMLENSHYDYLKMKMRMQTDIQGLLERMEATKKMWV.

The disordered stretch occupies residues 1–136; that stretch reads MFGDSDGSKD…LASLLQPVPA (136 aa). The span at 14–25 shows a compositional bias: pro residues; that stretch reads GAPPSTTDPPFP. Over residues 67–88 the composition is skewed to basic and acidic residues; sequence DDGKHCVERDFLHLSAPKRGDP. The span at 104 to 117 shows a compositional bias: low complexity; that stretch reads DSLQLSLSLNSDGP. The PHD-type zinc-finger motif lies at 406–470; the sequence is ACTCSVCHKF…QFQCLACNHS (65 aa). Residues 629 to 697 adopt a coiled-coil conformation; sequence VKCKEAEAKL…LEELKMLENS (69 aa).

Widely expressed.

The protein localises to the nucleus. In terms of biological role, probable transcription factor that functions as a regulator of metal transporter genes responsible for essential metals delivery to shoots and normal plant growth. Required for the maintenance of metal transporter gene expression, such as IRT1, IRT2, ZIP1, ZIP9, NRAMP1 and NRAMP5. The polypeptide is Protein TITANIA (Oryza sativa subsp. japonica (Rice)).